The sequence spans 264 residues: MQLTLFCFVCLLPGHLALPLSQEAGDVSAHQWEQAQNYLRKFYPHDSKTKKVNSLVDNLKEMQKFFGLPMTGKLSPYIMEIMQKPRCGVPDVAEYSLMPNSPKWHSRIVTYRIVSYTSDLPRIVVDQIVKKALRMWSMQIPLNFKRVSWGTADIIIGFARRDHGDSFPFDGPGNTLGHAFAPGPGLGGDAHFDKDEYWTDGEDAGVNFLFAATHEFGHSLGLSHSSVPGTVMYPTYQRDYSEDFSLTKDDIAGIQKLYGKRNTL.

Positions 1–17 (MQLTLFCFVCLLPGHLA) are cleaved as a signal peptide. Positions 18 to 94 (LPLSQEAGDV…PRCGVPDVAE (77 aa)) are cleaved as a propeptide — activation peptide. The Cysteine switch motif lies at 85 to 92 (PRCGVPDV). Cys87 provides a ligand contact to Zn(2+). Residue Asp153 coordinates Ca(2+). Residues His163 and Asp165 each coordinate Zn(2+). Residues Asp170, Gly171, Gly173, and Thr175 each coordinate Ca(2+). His178 is a binding site for Zn(2+). Gly185, Gly187, and Asp189 together coordinate Ca(2+). His191 lines the Zn(2+) pocket. Asp193 and Glu196 together coordinate Ca(2+). His214 contributes to the Zn(2+) binding site. The active site involves Glu215. Zn(2+) is bound by residues His218 and His224.

Belongs to the peptidase M10A family. It depends on Ca(2+) as a cofactor. Zn(2+) serves as cofactor. As to expression, expressed in the intestinal epithelium (at protein level).

Its subcellular location is the secreted. The protein resides in the extracellular space. It is found in the extracellular matrix. The enzyme catalyses Cleavage of 14-Ala-|-Leu-15 and 16-Tyr-|-Leu-17 in B chain of insulin. No action on collagen types I, II, IV, V. Cleaves gelatin chain alpha2(I) &gt; alpha1(I).. Its function is as follows. Degrades casein, gelatins of types I, III, IV, and V, and fibronectin. Activates procollagenase. In terms of biological role, may play a role in tissue reorganization. The protein is Matrilysin (Mmp7) of Mus musculus (Mouse).